Consider the following 654-residue polypeptide: Mitochondrial-processing peptidase subunit alpha-1 (654 aa).

The disordered stretch occupies residues 73 to 94 (SSSSYKGNNNNNNKLSYTTSSN). Residues 381-446 (HKNHLKSQLQ…EQLELQQVKE (66 aa)) adopt a coiled-coil conformation.

This sequence belongs to the peptidase M16 family. Heterodimer of alpha and beta subunits, forming the mitochondrial processing protease (MPP) in which subunit alpha is involved in substrate recognition and binding and subunit beta is the catalytic subunit.

It is found in the mitochondrion matrix. In terms of biological role, substrate recognition and binding subunit of the essential mitochondrial processing protease (MPP), which cleaves the mitochondrial sequence off newly imported precursors proteins. This chain is Mitochondrial-processing peptidase subunit alpha-1 (mppA1), found in Dictyostelium discoideum (Social amoeba).